Consider the following 453-residue polypeptide: Putative amino acid/polyamine transporter MPH_07630_2 (453 aa).

3 helical membrane-spanning segments follow: residues 2-21 (IGFS…VLVV), 30-50 (VMIW…YSMA), and 81-101 (VCGW…NFIA). Asn110 carries N-linked (GlcNAc...) asparagine glycosylation. 2 helical membrane-spanning segments follow: residues 121-141 (WHAV…SIFL) and 151-171 (AILI…LATN). Asn186 carries N-linked (GlcNAc...) asparagine glycosylation. The next 2 membrane-spanning stretches (helical) occupy residues 193–213 (AYAA…YDAP) and 231–251 (IVMS…SLCF). The N-linked (GlcNAc...) asparagine glycan is linked to Asn274. Transmembrane regions (helical) follow at residues 277–297 (GSVA…LVCA), 330–350 (LGVP…FNSI), 358–378 (FNTV…IPLL), and 403–423 (GLLA…TFNF). Residue Asn435 is glycosylated (N-linked (GlcNAc...) asparagine).

It belongs to the amino acid-polyamine-organocation (APC) superfamily.

It is found in the membrane. The protein is Putative amino acid/polyamine transporter MPH_07630_2 of Macrophomina phaseolina (strain MS6) (Charcoal rot fungus).